Consider the following 267-residue polypeptide: MINNNMMNSQYMFDYPAINIDVRCHRLLSSVSYVAYNKFHTHDVSTYEHCEIPLEKLRLGFGRRNSLADFYSLGELPASWGPACYFSSVKPMMYTFQGMASDLSRFDLTSFSRKGLPNVLKALSWPLGIPDCEIFSICSDRFVRGLQTRDQLMSYILRMGDSHSLDECIVQAHKKILQEARRLGLSDEHYNGYDLFREIGSLVCLRLINAEPFDTASSGEALDVRTVIRSYRASDPSTGLTEYGNSLWTPIHSHVDENDESSSDSDF.

This sequence belongs to the phlebovirus NS-S protein family.

This is Non-structural protein NS-S (NSS) from Homo sapiens (Human).